The chain runs to 78 residues: UPF0270 protein IL0325 (78 aa).

This sequence belongs to the UPF0270 family.

In Idiomarina loihiensis (strain ATCC BAA-735 / DSM 15497 / L2-TR), this protein is UPF0270 protein IL0325.